Here is a 501-residue protein sequence, read N- to C-terminus: Lysine--tRNA ligase (501 aa).

Residues E410 and E417 each contribute to the Mg(2+) site.

This sequence belongs to the class-II aminoacyl-tRNA synthetase family. As to quaternary structure, homodimer. Mg(2+) serves as cofactor.

The protein localises to the cytoplasm. It catalyses the reaction tRNA(Lys) + L-lysine + ATP = L-lysyl-tRNA(Lys) + AMP + diphosphate. This is Lysine--tRNA ligase from Shewanella halifaxensis (strain HAW-EB4).